The following is a 184-amino-acid chain: ATP synthase subunit b, chloroplastic (184 aa).

Residues 27-49 (LATNLINLSVVLGVLIFFGKGVL) traverse the membrane as a helical segment.

The protein belongs to the ATPase B chain family. In terms of assembly, F-type ATPases have 2 components, F(1) - the catalytic core - and F(0) - the membrane proton channel. F(1) has five subunits: alpha(3), beta(3), gamma(1), delta(1), epsilon(1). F(0) has four main subunits: a(1), b(1), b'(1) and c(10-14). The alpha and beta chains form an alternating ring which encloses part of the gamma chain. F(1) is attached to F(0) by a central stalk formed by the gamma and epsilon chains, while a peripheral stalk is formed by the delta, b and b' chains.

It localises to the plastid. The protein localises to the chloroplast thylakoid membrane. Its function is as follows. F(1)F(0) ATP synthase produces ATP from ADP in the presence of a proton or sodium gradient. F-type ATPases consist of two structural domains, F(1) containing the extramembraneous catalytic core and F(0) containing the membrane proton channel, linked together by a central stalk and a peripheral stalk. During catalysis, ATP synthesis in the catalytic domain of F(1) is coupled via a rotary mechanism of the central stalk subunits to proton translocation. In terms of biological role, component of the F(0) channel, it forms part of the peripheral stalk, linking F(1) to F(0). The protein is ATP synthase subunit b, chloroplastic of Liriodendron tulipifera (Tuliptree).